The chain runs to 1000 residues: Putative methyl-accepting chemotaxis protein sll0041 (1000 aa).

The tract at residues 1–59 is disordered; sequence MTQNPSSDRRPDTAQSVANGETLDGALFTGLTDTAAAQDESSETSASFATIDGEDKSEV. GAF domains follow at residues 342-478 and 509-650; these read EIQG…QTTL and NSEQ…GLAL. Residues 671-722 enclose the HAMP domain; sequence EKMQKRALELLMEVDPVSRGDLTIRAHVTEDEIGTIADSYNATIESLRRIVT. A Methyl-accepting transducer domain is found at 727–963; sequence AASQFTETTD…SVTQTMALVA (237 aa).

This sequence belongs to the methyl-accepting chemotaxis (MCP) protein family.

This Synechocystis sp. (strain ATCC 27184 / PCC 6803 / Kazusa) protein is Putative methyl-accepting chemotaxis protein sll0041.